A 50-amino-acid chain; its full sequence is Large ribosomal subunit protein eL39 (50 aa).

A compositionally biased stretch (basic residues) spans 1-12 (MGKKSKASKKRL). 2 disordered regions span residues 1 to 20 (MGKK…RQNS) and 30 to 50 (TNRD…DTDE).

The protein belongs to the eukaryotic ribosomal protein eL39 family.

The chain is Large ribosomal subunit protein eL39 (rpl39e) from Halobacterium salinarum (strain ATCC 700922 / JCM 11081 / NRC-1) (Halobacterium halobium).